The primary structure comprises 123 residues: Large ribosomal subunit protein bL12 (123 aa).

The protein belongs to the bacterial ribosomal protein bL12 family. Homodimer. Part of the ribosomal stalk of the 50S ribosomal subunit. Forms a multimeric L10(L12)X complex, where L10 forms an elongated spine to which 2 to 4 L12 dimers bind in a sequential fashion. Binds GTP-bound translation factors.

Functionally, forms part of the ribosomal stalk which helps the ribosome interact with GTP-bound translation factors. Is thus essential for accurate translation. In Shewanella sp. (strain MR-4), this protein is Large ribosomal subunit protein bL12.